Reading from the N-terminus, the 172-residue chain is Protein GrpE (172 aa).

The disordered stretch occupies residues 1-23 (MNQDHPEFDSEDLSQNPPETDPL).

Belongs to the GrpE family. In terms of assembly, homodimer.

Its subcellular location is the cytoplasm. Its function is as follows. Participates actively in the response to hyperosmotic and heat shock by preventing the aggregation of stress-denatured proteins, in association with DnaK and GrpE. It is the nucleotide exchange factor for DnaK and may function as a thermosensor. Unfolded proteins bind initially to DnaJ; upon interaction with the DnaJ-bound protein, DnaK hydrolyzes its bound ATP, resulting in the formation of a stable complex. GrpE releases ADP from DnaK; ATP binding to DnaK triggers the release of the substrate protein, thus completing the reaction cycle. Several rounds of ATP-dependent interactions between DnaJ, DnaK and GrpE are required for fully efficient folding. In Xanthomonas axonopodis pv. citri (strain 306), this protein is Protein GrpE.